Here is a 327-residue protein sequence, read N- to C-terminus: Aspartate--ammonia ligase (327 aa).

This sequence belongs to the class-II aminoacyl-tRNA synthetase family. AsnA subfamily.

Its subcellular location is the cytoplasm. It carries out the reaction L-aspartate + NH4(+) + ATP = L-asparagine + AMP + diphosphate + H(+). It functions in the pathway amino-acid biosynthesis; L-asparagine biosynthesis; L-asparagine from L-aspartate (ammonia route): step 1/1. The chain is Aspartate--ammonia ligase from Bacillus cereus (strain ATCC 10987 / NRS 248).